The following is a 386-amino-acid chain: Succinate--CoA ligase [ADP-forming] subunit beta (386 aa).

The ATP site is built by lysine 46, glutamate 99, alanine 102, and glutamate 107. Positions 199 and 213 each coordinate Mg(2+). Residues asparagine 264 and 321-323 (GIM) each bind substrate.

Belongs to the succinate/malate CoA ligase beta subunit family. Heterotetramer of two alpha and two beta subunits. The cofactor is Mg(2+).

It catalyses the reaction succinate + ATP + CoA = succinyl-CoA + ADP + phosphate. The enzyme catalyses GTP + succinate + CoA = succinyl-CoA + GDP + phosphate. The protein operates within carbohydrate metabolism; tricarboxylic acid cycle; succinate from succinyl-CoA (ligase route): step 1/1. Its function is as follows. Succinyl-CoA synthetase functions in the citric acid cycle (TCA), coupling the hydrolysis of succinyl-CoA to the synthesis of either ATP or GTP and thus represents the only step of substrate-level phosphorylation in the TCA. The beta subunit provides nucleotide specificity of the enzyme and binds the substrate succinate, while the binding sites for coenzyme A and phosphate are found in the alpha subunit. The protein is Succinate--CoA ligase [ADP-forming] subunit beta of Orientia tsutsugamushi (strain Ikeda) (Rickettsia tsutsugamushi).